A 588-amino-acid polypeptide reads, in one-letter code: Interferon-activable protein 208 (588 aa).

Residues 5–92 enclose the Pyrin domain; that stretch reads MVNYYKQIVL…VDILRKEMEK (88 aa). Disordered regions lie at residues 157 to 183 and 469 to 526; these read ATST…SLQT and EMQN…RRVN. Polar residues-rich tracts occupy residues 172–183 and 470–487; these read RFPTTASSSLQT and MQNP…QPRL.

It belongs to the HIN-200 family.

The sequence is that of Interferon-activable protein 208 from Mus musculus (Mouse).